A 1498-amino-acid chain; its full sequence is Rap guanine nucleotide exchange factor 2 (1498 aa).

Disordered regions lie at residues 40–59 (HVSS…SSSL) and 68–101 (SEAG…SDPL). A compositionally biased stretch (acidic residues) spans 83–94 (VDSEDDDDEEDI). Residue 135-252 (AFANMTMSVR…QKVEEEGEIV (118 aa)) coordinates a nucleoside 3',5'-cyclic phosphate. In terms of domain architecture, N-terminal Ras-GEF spans 267–380 (KGHIVIKGTS…RLLNIACAAK (114 aa)). Residues 385–468 (LMTLTKPSRE…LSITVKTNLF (84 aa)) form the PDZ domain. Ser-501 carries the phosphoserine modification. The Ras-associating domain maps to 606–692 (PDQVLRVFKA…GRYYLKNNME (87 aa)). Phosphothreonine is present on Thr-644. Positions 717–944 (STVEVATQLS…SQGSTNATVL (228 aa)) constitute a Ras-GEF domain. Phosphoserine is present on residues Ser-806, Ser-930, Ser-933, Ser-1022, Ser-1079, Ser-1088, Ser-1094, Ser-1115, Ser-1119, Ser-1158, and Ser-1175. Residues 1002-1048 (PATNTLPKNPGDKKPVKSETSPVAPRAGSQQKAQAQPPPPQPQPQHK) form a disordered region. Positions 1094-1159 (SLERHKKQAE…RSSIVSNSSF (66 aa)) are disordered. Composition is skewed to low complexity over residues 1110–1124 (SSQL…QSSP) and 1140–1159 (SDSG…NSSF). Disordered stretches follow at residues 1224–1257 (STEE…GSHD), 1304–1371 (TKYN…TKPV), and 1392–1498 (EGRY…VSAV). 2 stretches are compositionally biased toward polar residues: residues 1246-1257 (GSWTSCSSGSHD) and 1306-1330 (YNRQ…SSTG). Low complexity predominate over residues 1354 to 1365 (EAESSSVTSVTT). Over residues 1487 to 1498 (TEEDEDEQVSAV) the composition is skewed to acidic residues.

It belongs to the RAPGEF2 family. In terms of assembly, found in a complex, at least composed of KIDINS220, MAGI2, NTRK1 and RAPGEF2; the complex is mainly formed at late endosomes in a neuronal growth factor (NGF)-dependent manner. Interacts (via C-terminal domain) with NEDD4 (via WW domains); this interaction leads to ubiquitination and degradation via the proteasome pathway in a cAMP-independent manner. Interacts with MAGI1 (via PDZ domain). Interacts with ADRB1 (via C-terminal PDZ motif); the interaction is direct. Interacts (via Ras-associating domain) with RAP1A (via GTP-bound active form). Interacts weakly with HRAS (via GDP- and GTP-bound forms). Interacts (via C-terminal domain) with MAGI2 (via PDZ and WW domains). Interacts with CDH1, CTNNB1 and TJP1. Ubiquitinated by NEDD4, leading to proteasomal degradation. Post-translationally, phosphorylation by PLK2 promotes its activity.

The protein localises to the cell junction. It is found in the cytoplasm. Its subcellular location is the perinuclear region. It localises to the cell membrane. The protein resides in the late endosome. Functions as a guanine nucleotide exchange factor (GEF), which activates Rap and Ras family of small GTPases by exchanging bound GDP for free GTP in a cAMP-dependent manner. Serves as a link between cell surface receptors and Rap/Ras GTPases in intracellular signaling cascades. Also acts as an effector for Rap1 by direct association with Rap1-GTP thereby leading to the amplification of Rap1-mediated signaling. Shows weak activity on HRAS. It is controversial whether RAPGEF2 binds cAMP and cGMP or not. Its binding to ligand-activated beta-1 adrenergic receptor ADRB1 leads to the Ras activation through the G(s)-alpha signaling pathway. Involved in the cAMP-induced Ras and Erk1/2 signaling pathway that leads to sustained inhibition of long term melanogenesis by reducing dendrite extension and melanin synthesis. Also provides inhibitory signals for cell proliferation of melanoma cells and promotes their apoptosis in a cAMP-independent nanner. Regulates cAMP-induced neuritogenesis by mediating the Rap1/B-Raf/ERK signaling through a pathway that is independent on both PKA and RAPGEF3/RAPGEF4. Involved in neuron migration and in the formation of the major forebrain fiber connections forming the corpus callosum, the anterior commissure and the hippocampal commissure during brain development. Involved in neuronal growth factor (NGF)-induced sustained activation of Rap1 at late endosomes and in brain-derived neurotrophic factor (BDNF)-induced axon outgrowth of hippocampal neurons. Plays a role in the regulation of embryonic blood vessel formation and in the establishment of basal junction integrity and endothelial barrier function. May be involved in the regulation of the vascular endothelial growth factor receptor KDR and cadherin CDH5 expression at allantois endothelial cell-cell junctions. The protein is Rap guanine nucleotide exchange factor 2 (RAPGEF2) of Canis lupus familiaris (Dog).